The chain runs to 166 residues: Spiderine-1b (166 aa).

An N-terminal signal peptide occupies residues 1–18 (MKFALVLLGICAFYLVNA). The propeptide at 19-58 (TGDLETELEASELQELQEALDLIGETSLESLEAEELEEAR) is removed in mature form. A linear cationic cytotoxin domain region spans residues 59-99 (KFKWGKLFSAAKKLYKKGKKLSKNKNFKKALKFGKQLAKNL). An Oxytoxin-type inhibitor cystine knot (ICK) domain is found at 113–166 (NNKCWAIGTTCSDDCDCCPEHHCHCPAGKWLPGLFRCTCQVTESDKVNKCPPAE). Cystine bridges form between C116–C130, C123–C135, C127–C162, C129–C151, and C137–C149.

Belongs to the spiderine family. Cationic/spiderine subfamily. As to expression, expressed by the venom gland.

The protein localises to the secreted. Functionally, has antimicrobial, insecticidal, cytolytic and cytotoxic activity. The sequence is that of Spiderine-1b from Oxyopes takobius (Lynx spider).